Consider the following 402-residue polypeptide: E3 ubiquitin-protein ligase MARCHF11 (402 aa).

A compositionally biased stretch (gly residues) spans 1 to 11 (MSFEGGHGGSR). Residues 1–161 (MSFEGGHGGS…SGGGDQRAGH (161 aa)) form a disordered region. Residues 21 to 56 (EPPPQPPPPPPPTPPPGEPAPVPAAPRYLPPLPASP) show a composition bias toward pro residues. The span at 111–124 (EAAAAKGGPGESEA) shows a compositional bias: low complexity. An RING-CH-type zinc finger spans residues 162 to 222 (QHQHHQPICK…ELCCYRYHVI (61 aa)). Cys-170, Cys-173, Cys-186, Cys-188, His-196, Cys-199, Cys-212, and Cys-215 together coordinate Zn(2+). The next 2 helical transmembrane spans lie at 245 to 265 (MIAVILGSLFLIASVTWLLWS) and 278 to 298 (ILFQICYGMYGFMDLVCIGLI). Positions 371 to 374 (YVLL) match the YXXL motif motif. The short motif at 399 to 402 (VTSV) is the PDZ-binding element.

In terms of assembly, interacts (YXXL motif) with AP1M1. Interacts (via PDZ-binding motif) with LIN7A. Interacts with unidentified fucose glycoproteins.

The protein resides in the cytoplasmic vesicle membrane. It carries out the reaction S-ubiquitinyl-[E2 ubiquitin-conjugating enzyme]-L-cysteine + [acceptor protein]-L-lysine = [E2 ubiquitin-conjugating enzyme]-L-cysteine + N(6)-ubiquitinyl-[acceptor protein]-L-lysine.. It functions in the pathway protein modification; protein ubiquitination. Its function is as follows. E3 ubiquitin-protein ligase that mediates polyubiquitination of CD4. E3 ubiquitin ligases accept ubiquitin from an E2 ubiquitin-conjugating enzyme in the form of a thioester and then directly transfer the ubiquitin to targeted substrates. May play a role in ubuquitin-dependent protein sorting in developmenting spermatids. The sequence is that of E3 ubiquitin-protein ligase MARCHF11 from Homo sapiens (Human).